A 193-amino-acid polypeptide reads, in one-letter code: Lipopolysaccharide core heptose(II)-phosphate phosphatase (193 aa).

Residues 1–25 (MKLKKHVAVLLISFLCLIGLVTQHA) form the signal peptide.

It belongs to the phosphoglycerate mutase family. Ais subfamily.

The protein resides in the periplasm. Its pathway is bacterial outer membrane biogenesis; lipopolysaccharide metabolism. In terms of biological role, catalyzes the dephosphorylation of heptose(II) of the outer membrane lipopolysaccharide core. This Escherichia fergusonii (strain ATCC 35469 / DSM 13698 / CCUG 18766 / IAM 14443 / JCM 21226 / LMG 7866 / NBRC 102419 / NCTC 12128 / CDC 0568-73) protein is Lipopolysaccharide core heptose(II)-phosphate phosphatase.